Consider the following 694-residue polypeptide: DNA polymerase eta (694 aa).

The 250-residue stretch at Val9–Gly258 folds into the UmuC domain. Mg(2+)-binding residues include Asp13 and Met14. Asp13 and Met14 together coordinate Mn(2+). Position 61 (Arg61) interacts with a 2'-deoxyribonucleoside 5'-triphosphate. Mg(2+)-binding residues include Asp115 and Glu116. 2 residues coordinate Mn(2+): Asp115 and Glu116. Residue Glu116 is part of the active site. The interval Asp565 to Pro598 is disordered. A UBZ3-type zinc finger spans residues Ala609–Ser643. Residues Cys616, Cys619, His631, and His635 each coordinate Zn(2+). The segment at Lys651–His694 is disordered. Glycyl lysine isopeptide (Lys-Gly) (interchain with G-Cter in ubiquitin) cross-links involve residues Lys663, Lys667, and Lys675. Positions Met682–Phe689 match the PIP-box motif. Lys690 participates in a covalent cross-link: Glycyl lysine isopeptide (Lys-Gly) (interchain with G-Cter in ubiquitin).

This sequence belongs to the DNA polymerase type-Y family. Interacts with REV1. Interacts with monoubiquitinated PCNA, but not unmodified PCNA. Interacts with POLI; this interaction targets POLI to the replication machinery. Interacts with PALB2 and BRCA2; the interactions are direct and are required to sustain the recruitment of POLH at blocked replication forks and to stimulate POLH-dependent DNA synthesis on D loop substrates. Interacts (via C-terminus) with TRAIP. Interacts with ubiquitin. Interacts with POLDIP2. The cofactor is Mg(2+). It depends on Mn(2+) as a cofactor. Monoubiquitinated by RCHY1/PIRH2. Ubiquitination depends on integrity of the UBZ3-type zinc finger domain and is enhanced by TRAIP. Ubiquitination inhibits the ability of PolH to interact with PCNA and to bypass UV-induced lesions. As to expression, ubiquitous.

The protein localises to the nucleus. It catalyses the reaction DNA(n) + a 2'-deoxyribonucleoside 5'-triphosphate = DNA(n+1) + diphosphate. Its activity is regulated as follows. The enzyme in complex with the DNA substrate binds a third divalent metal cation. The binding of this third divalent cation, which is coordinated by water molecules and two oxygen atoms from DNA and dNTP, is essential for catalyzing the DNA synthesis. DNA polymerase specifically involved in the DNA repair by translesion synthesis (TLS). Due to low processivity on both damaged and normal DNA, cooperates with the heterotetrameric (REV3L, REV7, POLD2 and POLD3) POLZ complex for complete bypass of DNA lesions. Inserts one or 2 nucleotide(s) opposite the lesion, the primer is further extended by the tetrameric POLZ complex. In the case of 1,2-intrastrand d(GpG)-cisplatin cross-link, inserts dCTP opposite the 3' guanine. Particularly important for the repair of UV-induced pyrimidine dimers. Although inserts the correct base, may cause base transitions and transversions depending upon the context. May play a role in hypermutation at immunoglobulin genes. Forms a Schiff base with 5'-deoxyribose phosphate at abasic sites, but does not have any lyase activity, preventing the release of the 5'-deoxyribose phosphate (5'-dRP) residue. This covalent trapping of the enzyme by the 5'-dRP residue inhibits its DNA synthetic activity during base excision repair, thereby avoiding high incidence of mutagenesis. Targets POLI to replication foci. The chain is DNA polymerase eta (Polh) from Mus musculus (Mouse).